Consider the following 316-residue polypeptide: Pantothenate kinase (316 aa).

Glycine 95–serine 102 provides a ligand contact to ATP.

The protein belongs to the prokaryotic pantothenate kinase family.

It is found in the cytoplasm. It carries out the reaction (R)-pantothenate + ATP = (R)-4'-phosphopantothenate + ADP + H(+). It participates in cofactor biosynthesis; coenzyme A biosynthesis; CoA from (R)-pantothenate: step 1/5. In Yersinia enterocolitica serotype O:8 / biotype 1B (strain NCTC 13174 / 8081), this protein is Pantothenate kinase.